The chain runs to 634 residues: Chaperone protein DnaK (634 aa).

Thr199 carries the post-translational modification Phosphothreonine; by autocatalysis. The segment covering 601-618 has biased composition (low complexity); sequence AAAGQAQAESGAGAQGNA. The interval 601–634 is disordered; that stretch reads AAAGQAQAESGAGAQGNAKPDDVVDAEFEEVDKK. Residues 623 to 634 show a composition bias toward acidic residues; the sequence is VVDAEFEEVDKK.

The protein belongs to the heat shock protein 70 family.

Acts as a chaperone. The polypeptide is Chaperone protein DnaK (Acidithiobacillus ferrooxidans (strain ATCC 23270 / DSM 14882 / CIP 104768 / NCIMB 8455) (Ferrobacillus ferrooxidans (strain ATCC 23270))).